The chain runs to 288 residues: CUF1-dependent copper transporter 1 (288 aa).

The N-linked (GlcNAc...) asparagine glycan is linked to N18. The helical transmembrane segment at 42 to 62 threads the bilayer; that stretch reads MPSSAGATVGVCIGLFILAIF. Disordered stretches follow at residues 106-125 and 154-180; these read PVLF…YNPL and RESQ…GSGV. Residues 158–167 are compositionally biased toward polar residues; it reads EGSSAPSYAH. A compositionally biased stretch (low complexity) spans 168–177; sequence SQQGQAQAQG. Residues 251–271 traverse the membrane as a helical segment; sequence LLMLVVMTFNIWWMISVVIGC.

It belongs to the copper transporter (Ctr) (TC 1.A.56) family. SLC31A subfamily. Interacts with the copper acquisition factor BIM1.

The protein localises to the cell membrane. High affinity copper transporter involved in Cu(+) import into the cell upon copper-limitating conditions. Functions with BIM1 and probably also FRE4 and FRE7, where FRE4 and FRE7 metalloreductases liberate the Cu(2+) bound to the BIM1 copper-binding site for subsequent import of Cu(+) into the cell by CTR1, via the reduction of BIM1-bound Cu(2+) to Cu(+) to reduce binding affinity for BIM1 but increase affinity for CTR1. The BIM1-CTR1 pathway for copper uptake plays a key role in colonization in the brain where copper amounts are low and thus in cryptococcal meningitis. This chain is CUF1-dependent copper transporter 1, found in Cryptococcus neoformans var. grubii serotype A (strain H99 / ATCC 208821 / CBS 10515 / FGSC 9487) (Filobasidiella neoformans var. grubii).